The primary structure comprises 311 residues: MNILLANPRGFCAGVDRAISIVESALEKFGAPIYVRHEVVHNRYVVNKLKEAGAVFVEELDEVPDDSIVIFSAHGVSKAVREMAKSRALKVFDATCPLVTKVHMEVHRASRKGSEAVLIGHAGHPEVIGTMGQYENREGGMYLVETPEDVAKLKVKNPDDLCFVTQTTLSVDETSDVIDALRAHFPKIQGPRKDDICYATQNRQDAVREMAGLVDAMLVVGSRNSSNSNRLRELAEKVGAKAYLIDDASMIEADWLAGVEAIGVTAGASAPEVLVQSVITRLRELGGKVVAEHPGREENVVFEVPPELRIL.

C12 provides a ligand contact to [4Fe-4S] cluster. Residues H41 and H74 each contribute to the (2E)-4-hydroxy-3-methylbut-2-enyl diphosphate site. Positions 41 and 74 each coordinate dimethylallyl diphosphate. Residues H41 and H74 each coordinate isopentenyl diphosphate. [4Fe-4S] cluster is bound at residue C96. H124 contributes to the (2E)-4-hydroxy-3-methylbut-2-enyl diphosphate binding site. H124 contacts dimethylallyl diphosphate. H124 is an isopentenyl diphosphate binding site. Residue E126 is the Proton donor of the active site. Residue T167 coordinates (2E)-4-hydroxy-3-methylbut-2-enyl diphosphate. Residue C197 coordinates [4Fe-4S] cluster. Residues S225, S226, N227, and S269 each contribute to the (2E)-4-hydroxy-3-methylbut-2-enyl diphosphate site. The dimethylallyl diphosphate site is built by S225, S226, N227, and S269. 4 residues coordinate isopentenyl diphosphate: S225, S226, N227, and S269.

This sequence belongs to the IspH family. [4Fe-4S] cluster is required as a cofactor.

The enzyme catalyses isopentenyl diphosphate + 2 oxidized [2Fe-2S]-[ferredoxin] + H2O = (2E)-4-hydroxy-3-methylbut-2-enyl diphosphate + 2 reduced [2Fe-2S]-[ferredoxin] + 2 H(+). The catalysed reaction is dimethylallyl diphosphate + 2 oxidized [2Fe-2S]-[ferredoxin] + H2O = (2E)-4-hydroxy-3-methylbut-2-enyl diphosphate + 2 reduced [2Fe-2S]-[ferredoxin] + 2 H(+). It functions in the pathway isoprenoid biosynthesis; dimethylallyl diphosphate biosynthesis; dimethylallyl diphosphate from (2E)-4-hydroxy-3-methylbutenyl diphosphate: step 1/1. Its pathway is isoprenoid biosynthesis; isopentenyl diphosphate biosynthesis via DXP pathway; isopentenyl diphosphate from 1-deoxy-D-xylulose 5-phosphate: step 6/6. Its function is as follows. Catalyzes the conversion of 1-hydroxy-2-methyl-2-(E)-butenyl 4-diphosphate (HMBPP) into a mixture of isopentenyl diphosphate (IPP) and dimethylallyl diphosphate (DMAPP). Acts in the terminal step of the DOXP/MEP pathway for isoprenoid precursor biosynthesis. This chain is 4-hydroxy-3-methylbut-2-enyl diphosphate reductase, found in Aeromonas hydrophila subsp. hydrophila (strain ATCC 7966 / DSM 30187 / BCRC 13018 / CCUG 14551 / JCM 1027 / KCTC 2358 / NCIMB 9240 / NCTC 8049).